The sequence spans 72 residues: Large ribosomal subunit protein bL31c (72 aa).

The protein belongs to the bacterial ribosomal protein bL31 family. Type A subfamily. In terms of assembly, part of the 50S ribosomal subunit.

It is found in the plastid. The protein resides in the chloroplast. Functionally, binds the 23S rRNA. The protein is Large ribosomal subunit protein bL31c of Guillardia theta (Cryptophyte).